An 89-amino-acid chain; its full sequence is Small ribosomal subunit protein uS15 (89 aa).

The protein belongs to the universal ribosomal protein uS15 family. As to quaternary structure, part of the 30S ribosomal subunit. Forms a bridge to the 50S subunit in the 70S ribosome, contacting the 23S rRNA.

Its function is as follows. One of the primary rRNA binding proteins, it binds directly to 16S rRNA where it helps nucleate assembly of the platform of the 30S subunit by binding and bridging several RNA helices of the 16S rRNA. In terms of biological role, forms an intersubunit bridge (bridge B4) with the 23S rRNA of the 50S subunit in the ribosome. The sequence is that of Small ribosomal subunit protein uS15 from Methylococcus capsulatus (strain ATCC 33009 / NCIMB 11132 / Bath).